The sequence spans 756 residues: ATP-dependent 6-phosphofructokinase 2 (756 aa).

The N-terminal catalytic PFK domain 1 stretch occupies residues 1–393 (MEQKFKKGKD…KQTYLNFVSI (393 aa)). ATP contacts are provided by residues G20, 81–82 (RC), and 111–114 (GDGS). D112 lines the Mg(2+) pocket. Substrate contacts are provided by residues 157-159 (SID), R194, 201-203 (MGR), E257, R285, and 291-294 (HLQR). Residue D159 is the Proton acceptor of the active site. Positions 394 to 404 (PLSTTMPSRTK) are interdomain linker. Residues 405 to 756 (TFAVVHIGSP…KKPQEAVLSS (352 aa)) form a C-terminal regulatory PFK domain 2 region. Beta-D-fructose 2,6-bisphosphate-binding positions include R474, 530-534 (TISNN), 575-577 (MGS), E632, R658, and 664-667 (YSQL).

Belongs to the phosphofructokinase type A (PFKA) family. ATP-dependent PFK group I subfamily. Eukaryotic two domain clade 'E' sub-subfamily. Homotetramer. Mg(2+) serves as cofactor.

Its subcellular location is the cytoplasm. It carries out the reaction beta-D-fructose 6-phosphate + ATP = beta-D-fructose 1,6-bisphosphate + ADP + H(+). It functions in the pathway carbohydrate degradation; glycolysis; D-glyceraldehyde 3-phosphate and glycerone phosphate from D-glucose: step 3/4. Its activity is regulated as follows. Allosterically activated by ADP, AMP, or fructose 2,6-bisphosphate, and allosterically inhibited by ATP or citrate. Catalyzes the phosphorylation of D-fructose 6-phosphate to fructose 1,6-bisphosphate by ATP, the first committing step of glycolysis. The sequence is that of ATP-dependent 6-phosphofructokinase 2 from Caenorhabditis elegans.